Consider the following 359-residue polypeptide: NF-kappa-B inhibitor beta (359 aa).

Ser-19 and Ser-23 each carry phosphoserine; by RPS6KA1. ANK repeat units lie at residues 57-86 (DGDTALHLAVIHQHEPFLDFLLGFSAGTEY), 93-122 (LGQTALHLAAILGEASTVEKLYAAGAGVLV), and 126-155 (GGHTALHLACRVRAHTCACVLLQPRPSHPR). Residues 153–194 (HPRDASDTYLTQSQDCTPDTSHAPAAVDSQPNPENEEEPRDE) form a disordered region. Residues 160–172 (TYLTQSQDCTPDT) are compositionally biased toward polar residues. ANK repeat units follow at residues 206 to 235 (DGHTPLHVAVIHKDAEMVRLLRDAGADLNK), 240 to 269 (CGRTPLHLAVEAQAASVLELLLKAGADPTA), and 273 to 302 (GGRTPLGSALLRPNPILARLLRAHGAPEPE). Residues 298 to 359 (APEPEDEDDK…KPLPDDPNPA (62 aa)) form a disordered region. A phosphoserine mark is found at Ser-313 and Ser-318. The segment covering 318-331 (SDSDNRDEGDEYDD) has biased composition (acidic residues). The span at 344–359 (PPSPASKPLPDDPNPA) shows a compositional bias: pro residues.

The protein belongs to the NF-kappa-B inhibitor family. As to quaternary structure, interacts with THRB (via ligand-binding domain). Interacts with RELA and REL. Interacts with COMMD1. Interacts with inhibitor kappa B-interacting Ras-like NKIRAS1 and NKIRAS2. Phosphorylated by RPS6KA1; followed by degradation. Interaction with NKIRAS1 and NKIRAS2 probably prevents phosphorylation. Highly expressed in testis followed by spleen.

It is found in the cytoplasm. Its subcellular location is the nucleus. Functionally, inhibits NF-kappa-B by complexing with and trapping it in the cytoplasm. However, the unphosphorylated form resynthesized after cell stimulation is able to bind NF-kappa-B allowing its transport to the nucleus and protecting it to further NFKBIA-dependent inactivation. Association with inhibitor kappa B-interacting NKIRAS1 and NKIRAS2 prevent its phosphorylation rendering it more resistant to degradation, explaining its slower degradation. The chain is NF-kappa-B inhibitor beta (Nfkbib) from Mus musculus (Mouse).